The following is a 229-amino-acid chain: 2,3-bisphosphoglycerate-dependent phosphoglycerate mutase (229 aa).

Substrate contacts are provided by residues 7–14, 20–21, Arg-59, 86–89, Lys-97, 113–114, and 182–183; these read RHGQSEWN, TG, ERHY, RR, and GN. Residue His-8 is the Tele-phosphohistidine intermediate of the active site. Glu-86 (proton donor/acceptor) is an active-site residue.

The protein belongs to the phosphoglycerate mutase family. BPG-dependent PGAM subfamily.

It catalyses the reaction (2R)-2-phosphoglycerate = (2R)-3-phosphoglycerate. It functions in the pathway carbohydrate degradation; glycolysis; pyruvate from D-glyceraldehyde 3-phosphate: step 3/5. Catalyzes the interconversion of 2-phosphoglycerate and 3-phosphoglycerate. This Listeria monocytogenes serotype 4a (strain HCC23) protein is 2,3-bisphosphoglycerate-dependent phosphoglycerate mutase.